Here is a 247-residue protein sequence, read N- to C-terminus: Germin-like protein 9-1 (247 aa).

The first 25 residues, 1 to 25, serve as a signal peptide directing secretion; that stretch reads MMMSSRSSVSLGVLLLLAVILSAGA. One can recognise a Cupin type-1 domain in the interval 53–201; the sequence is KNLVTGNSGD…SMHTDQATVD (149 aa). Positions 100, 102, and 107 each coordinate Mn(2+). A glycan (N-linked (GlcNAc...) asparagine) is linked at Asn-126. A Mn(2+)-binding site is contributed by His-148. N-linked (GlcNAc...) asparagine glycosylation occurs at Asn-153.

It belongs to the germin family. As to quaternary structure, oligomer (believed to be a pentamer but probably hexamer).

It is found in the secreted. The protein resides in the extracellular space. The protein localises to the apoplast. May play a role in plant defense. Probably has no oxalate oxidase activity even if the active site is conserved. The protein is Germin-like protein 9-1 of Oryza sativa subsp. japonica (Rice).